We begin with the raw amino-acid sequence, 113 residues long: Hydrogenase maturation factor HypA 2 (113 aa).

His2 is a binding site for Ni(2+). Zn(2+) is bound by residues Cys73, Cys76, Cys89, and Cys92.

It belongs to the HypA/HybF family.

Its function is as follows. Involved in the maturation of [NiFe] hydrogenases. Required for nickel insertion into the metal center of the hydrogenase. This Bradyrhizobium diazoefficiens (strain JCM 10833 / BCRC 13528 / IAM 13628 / NBRC 14792 / USDA 110) protein is Hydrogenase maturation factor HypA 2.